We begin with the raw amino-acid sequence, 207 residues long: Large ribosomal subunit protein uL4 (207 aa).

A disordered region spans residues 58–85; sequence AGSGKKPFKQKGTGQARQGCRRAPQYPG.

It belongs to the universal ribosomal protein uL4 family. In terms of assembly, part of the 50S ribosomal subunit.

One of the primary rRNA binding proteins, this protein initially binds near the 5'-end of the 23S rRNA. It is important during the early stages of 50S assembly. It makes multiple contacts with different domains of the 23S rRNA in the assembled 50S subunit and ribosome. Its function is as follows. Forms part of the polypeptide exit tunnel. The polypeptide is Large ribosomal subunit protein uL4 (Geotalea uraniireducens (strain Rf4) (Geobacter uraniireducens)).